The chain runs to 330 residues: MSKLGDYAAVKKDILAVLKQPEYDDGSAGPVLVRLAWHASGTYCARTDTGGSNGAGMRYEAEGGDPANAGLQHARVFLEPIKEKHSWITYADLWTLAGVVAIEAMGGPSIQWKPGRTDFADDSRLPPRGRLPDGAQGADHLRFIFNRMGFNDQEIVALSGAHNLGRCHSDRSGFEGPWVNSPTRFSNQYYKLLLKLKWQPKKWDGPFQYVAKAPGADDDDEQLMMLPTDYALIQDEKMRPWVEKYAEDRDAFFNDFAKVFAKLIELGVYRDESGIARADKMKQFKGEYKSAPQKSPVPGAPGAGKDGEANPLARQNERAHGQAQHALAKL.

Histidine 38 acts as the Proton acceptor in catalysis. Histidine 162 contacts heme b. Tryptophan 178 functions as the Tryptophan radical intermediate in the catalytic mechanism. The segment at 286-330 is disordered; the sequence is GEYKSAPQKSPVPGAPGAGKDGEANPLARQNERAHGQAQHALAKL.

The protein belongs to the peroxidase family. Cytochrome c peroxidase subfamily. Requires heme b as cofactor.

In terms of biological role, destroys radicals which are normally produced within the cells and which are toxic to biological systems. The chain is Putative heme-binding peroxidase (CCP2) from Mycosarcoma maydis (Corn smut fungus).